The sequence spans 416 residues: Advanced glycosylation end product-specific receptor (416 aa).

Positions 1-22 (MAAGAVVGAWMLVLSLGGTVTG) are cleaved as a signal peptide. An Ig-like V-type domain is found at 23-115 (DQNITARIGK…KETKSNYRVR (93 aa)). Topologically, residues 23 to 352 (DQNITARIGK…VEGPGLETLA (330 aa)) are extracellular. Residues Asn25 and Asn80 are each glycosylated (N-linked (GlcNAc...) asparagine). 2 disulfides stabilise this stretch: Cys38-Cys98 and Cys143-Cys207. Ig-like C2-type domains lie at 123 to 220 (PEIV…RALH) and 238 to 327 (PNVD…RAVS). A helical membrane pass occupies residues 353 to 373 (LTLGILGGLGTVALLIGVIVW). At 374–416 (HRRRQRKGQERKVPENQEEEEEERAELNQPEEPEAAESSTGGP) the chain is on the cytoplasmic side. Residues 377–416 (RQRKGQERKVPENQEEEEEERAELNQPEEPEAAESSTGGP) form a disordered region. A compositionally biased stretch (acidic residues) spans 389-408 (NQEEEEEERAELNQPEEPEA).

As to quaternary structure, constitutive homodimer; disulfide-linked. Forms homooligomers. Interacts with S100A1 and APP. Interacts with S100B, S100A12 and S100A14. Interacts with TIRAP. Interacts with HMGB1. Interacts with LGP2; this interaction plays an important role in AGER-mediated pro-inflammatory responses and cytokine release. Interacts with double-strand break repair protein MRE11 which is a core component of the MRN complex; the interaction enhances MRE11 endonuclease activity and promotes DNA repair. Interacts with the MCM2-7 complex via interaction with complex member MCM2; the interaction is increased following DNA replication stress and stabilizes the MCM2-7 complex at replication forks. Post-translationally, phosphorylated on its cytoplasmic domain by PKCzeta/PRKCZ upon ligand binding. Phosphorylated by ATM following DNA damage. In terms of processing, targeted by the ubiquitin E3 ligase subunit FBXO10 to mediate its ubiquitination and degradation. Endothelial cells.

The protein resides in the cell membrane. It is found in the cell projection. It localises to the phagocytic cup. The protein localises to the early endosome. Its subcellular location is the nucleus. In terms of biological role, cell surface pattern recognition receptor that senses endogenous stress signals with a broad ligand repertoire including advanced glycation end products, S100 proteins, high-mobility group box 1 protein/HMGB1, amyloid beta/APP oligomers, nucleic acids, histones, phospholipids and glycosaminoglycans. Advanced glycosylation end products are nonenzymatically glycosylated proteins which accumulate in vascular tissue in aging and at an accelerated rate in diabetes. These ligands accumulate at inflammatory sites during the pathogenesis of various diseases including diabetes, vascular complications, neurodegenerative disorders and cancers, and RAGE transduces their binding into pro-inflammatory responses. Upon ligand binding, uses TIRAP and MYD88 as adapters to transduce the signal ultimately leading to the induction of inflammatory cytokines IL6, IL8 and TNFalpha through activation of NF-kappa-B. Interaction with S100A12 on endothelium, mononuclear phagocytes, and lymphocytes triggers cellular activation, with generation of key pro-inflammatory mediators. Interaction with S100B after myocardial infarction may play a role in myocyte apoptosis by activating ERK1/2 and p53/TP53 signaling. Contributes to the translocation of amyloid-beta peptide (ABPP) across the cell membrane from the extracellular to the intracellular space in cortical neurons. ABPP-initiated RAGE signaling, especially stimulation of p38 mitogen-activated protein kinase (MAPK), has the capacity to drive a transport system delivering ABPP as a complex with RAGE to the intraneuronal space. Participates in endothelial albumin transcytosis together with HMGB1 through the RAGE/SRC/Caveolin-1 pathway, leading to endothelial hyperpermeability. Mediates the loading of HMGB1 in extracellular vesicles (EVs) that shuttle HMGB1 to hepatocytes by transferrin-mediated endocytosis and subsequently promote hepatocyte pyroptosis by activating the NLRP3 inflammasome. Binds to DNA and promotes extracellular hypomethylated DNA (CpG DNA) uptake by cells via the endosomal route to activate inflammatory responses. Mediates phagocytosis by non-professional phagocytes (NPP) and this is enhanced by binding to ligands including RNA, DNA, HMGB1 and histones. Promotes NPP-mediated phagocytosis of Saccharomyces cerevisiae spores by binding to RNA attached to the spore wall. Also promotes NPP-mediated phagocytosis of apoptotic cells. Following DNA damage, recruited to DNA double-strand break sites where it colocalizes with the MRN repair complex via interaction with double-strand break repair protein MRE11. Enhances the endonuclease activity of MRE11, promoting the end resection of damaged DNA. Promotes DNA damage repair in trophoblasts which enhances trophoblast invasion and contributes to placental development and maintenance. Protects cells from DNA replication stress by localizing to damaged replication forks where it stabilizes the MCM2-7 complex and promotes faithful progression of the replication fork. The chain is Advanced glycosylation end product-specific receptor (AGER) from Bos taurus (Bovine).